The following is a 316-amino-acid chain: L-lactate dehydrogenase (316 aa).

NAD(+)-binding positions include Val-15, Asp-37, Lys-42, Tyr-68, and 82 to 83 (GL). Substrate contacts are provided by residues Gln-85, Arg-91, and 123-126 (NPVD). NAD(+) is bound by residues 121-123 (ASN) and Thr-146. Residue 151–154 (DTSR) coordinates substrate. Residues Arg-156 and His-171 each coordinate beta-D-fructose 1,6-bisphosphate. His-178 functions as the Proton acceptor in the catalytic mechanism. Position 222 is a phosphotyrosine (Tyr-222). A substrate-binding site is contributed by Thr-231.

It belongs to the LDH/MDH superfamily. LDH family. Homotetramer.

It localises to the cytoplasm. The catalysed reaction is (S)-lactate + NAD(+) = pyruvate + NADH + H(+). It participates in fermentation; pyruvate fermentation to lactate; (S)-lactate from pyruvate: step 1/1. With respect to regulation, allosterically activated by fructose 1,6-bisphosphate (FBP). In terms of biological role, catalyzes the conversion of lactate to pyruvate. The chain is L-lactate dehydrogenase from Borrelia garinii subsp. bavariensis (strain ATCC BAA-2496 / DSM 23469 / PBi) (Borreliella bavariensis).